We begin with the raw amino-acid sequence, 65 residues long: Prokaryotic ubiquitin-like protein Pup (65 aa).

The segment covering 1-14 has biased composition (basic and acidic residues); sequence MSGHEQQRPSRREE. A disordered region spans residues 1 to 35; that stretch reads MSGHEQQRPSRREEDVEETPVVPAQAGAQAKESDA. The segment at 21–59 is ARC ATPase binding; sequence VVPAQAGAQAKESDADVDALLDEIDEVLESNSEEFVRGF. Residues 26-49 adopt a coiled-coil conformation; it reads AGAQAKESDADVDALLDEIDEVLE. Q65 bears the Deamidated glutamine mark. Residue Q65 forms an Isoglutamyl lysine isopeptide (Gln-Lys) (interchain with K-? in acceptor proteins) linkage.

The protein belongs to the prokaryotic ubiquitin-like protein family. Strongly interacts with the proteasome-associated ATPase ARC through a hydrophobic interface; the interacting region of Pup lies in its C-terminal half. There is one Pup binding site per ARC hexamer ring. Post-translationally, is modified by deamidation of its C-terminal glutamine to glutamate by the deamidase Dop, a prerequisite to the subsequent pupylation process.

Its pathway is protein degradation; proteasomal Pup-dependent pathway. In terms of biological role, protein modifier that is covalently attached to lysine residues of substrate proteins, thereby targeting them for proteasomal degradation. The tagging system is termed pupylation. The protein is Prokaryotic ubiquitin-like protein Pup of Kineococcus radiotolerans (strain ATCC BAA-149 / DSM 14245 / SRS30216).